The sequence spans 770 residues: Transferrin receptor protein 1 (770 aa).

The Cytoplasmic segment spans residues 1-70; the sequence is MMDQARSAFS…KPKRCNGFIC (70 aa). Residues 1 to 70 are mediates interaction with SH3BP4; that stretch reads MMDQARSAFS…KPKRCNGFIC (70 aa). Ser10 and Ser19 each carry phosphoserine. Tyr20 carries the phosphotyrosine modification. The short motif at 20-23 is the Endocytosis signal element; it reads YTRF. Phosphothreonine is present on Thr21. Position 24 is a phosphoserine (Ser24). The Stop-transfer sequence signature appears at 61-64; that stretch reads KPKR. S-palmitoyl cysteine attachment occurs at residues Cys65 and Cys70. A helical; Signal-anchor for type II membrane protein membrane pass occupies residues 71 to 90; the sequence is YGTIAVVLFFLIGFMIGYLG. Over 91-770 the chain is Extracellular; it reads YCKRVEPKAG…GDIWDIDNEF (680 aa). A disordered region spans residues 102–122; the sequence is ERPTGTEALGTERTEPSETEE. O-linked (GalNAc...) threonine glycosylation occurs at Thr107. Positions 233–323 constitute a PA domain; that stretch reads SKATTVTGRL…GTGDPYTPGF (91 aa). 3 N-linked (GlcNAc...) asparagine glycosylation sites follow: Asn261, Asn327, and Asn384. The ligand-binding stretch occupies residues 579 to 770; that stretch reads TMDLYENLNQ…GDIWDIDNEF (192 aa). The Cell attachment site motif lies at 656–658; the sequence is RGD. N-linked (GlcNAc...) asparagine glycans are attached at residues Asn732 and Asn737.

The protein belongs to the peptidase M28 family. M28B subfamily. Homodimer; disulfide-linked. Binds one transferrin molecule per subunit. Interacts with SH3BP4. Interacts with STEAP3; facilitates TFRC endocytosis in erythroid precursor cells. In terms of processing, stearoylated by ZDHHC6 which inhibits TFRC-mediated activation of the JNK pathway and promotes mitochondrial fragmentation. Stearoylation does not affect iron uptake. Post-translationally, N- and O-glycosylated, phosphorylated and palmitoylated.

The protein localises to the cell membrane. Its subcellular location is the melanosome. In terms of biological role, cellular uptake of iron occurs via receptor-mediated endocytosis of ligand-occupied transferrin receptor into specialized endosomes. Endosomal acidification leads to iron release. The apotransferrin-receptor complex is then recycled to the cell surface with a return to neutral pH and the concomitant loss of affinity of apotransferrin for its receptor. Transferrin receptor is necessary for development of erythrocytes and the nervous system. Positively regulates T and B cell proliferation through iron uptake. Acts as a lipid sensor that regulates mitochondrial fusion by regulating activation of the JNK pathway. When dietary levels of stearate (C18:0) are low, promotes activation of the JNK pathway, resulting in HUWE1-mediated ubiquitination and subsequent degradation of the mitofusin MFN2 and inhibition of mitochondrial fusion. When dietary levels of stearate (C18:0) are high, TFRC stearoylation inhibits activation of the JNK pathway and thus degradation of the mitofusin MFN2. Mediates uptake of NICOL1 into fibroblasts where it may regulate extracellular matrix production. In Canis lupus familiaris (Dog), this protein is Transferrin receptor protein 1 (TFRC).